The following is a 687-amino-acid chain: E3 ubiquitin-protein ligase RNF19B (687 aa).

The segment at 1–294 (MRLRNDCLVR…VCGCEFCWLC (294 aa)) is required for ubiquitin ligase activity and for protection against staurosporin-induced cell death. Residues 53–88 (RTRAAPEPSVPSPPPSPPPPPPPPVSVPPPPSSPGG) form a disordered region. Over residues 60–85 (PSVPSPPPSPPPPPPPPVSVPPPPSS) the composition is skewed to pro residues. The interval 91–313 (SLIECPLCLV…LSPSGCTFWG (223 aa)) is TRIAD supradomain. Zn(2+)-binding residues include cysteine 95, cysteine 98, cysteine 118, cysteine 121, cysteine 182, cysteine 187, cysteine 204, cysteine 209, cysteine 214, cysteine 217, histidine 222, cysteine 227, cysteine 263, and cysteine 266. An RING-type 1 zinc finger spans residues 95–144 (CPLCLVRQPPEEIPELLSCRHRSCLRCLRQYLRIEICESRVNLRCPECAE). An IBR-type zinc finger spans residues 161–227 (TRKYEEFLLR…KHVWHPNQTC (67 aa)). The RING-type 2; atypical zinc-finger motif lies at 263–294 (CPRCSAYIIKMNDGSCNHMTCSVCGCEFCWLC). Cysteine 278 is a catalytic residue. Zn(2+)-binding residues include cysteine 283, cysteine 286, cysteine 291, cysteine 294, histidine 302, and cysteine 309. 2 helical membrane passes run 330-350 (LIGA…AMVI) and 391-411 (VVAA…VYGV). The disordered stretch occupies residues 618-662 (SIRSDLESSDAQSDDVPDLASEEYDSPHLFPPSPSNALQESPPHR). A compositionally biased stretch (acidic residues) spans 629-641 (QSDDVPDLASEEY).

It belongs to the RBR family. RNF19 subfamily. As to quaternary structure, interacts with UBE2L3, UBE2L6 and UCKL1.

Its subcellular location is the cytoplasmic granule membrane. The protein resides in the endoplasmic reticulum membrane. It carries out the reaction [E2 ubiquitin-conjugating enzyme]-S-ubiquitinyl-L-cysteine + [acceptor protein]-L-lysine = [E2 ubiquitin-conjugating enzyme]-L-cysteine + [acceptor protein]-N(6)-ubiquitinyl-L-lysine.. It participates in protein modification; protein ubiquitination. In terms of biological role, E3 ubiquitin-protein ligase which accepts ubiquitin from E2 ubiquitin-conjugating enzymes UBE2L3 and UBE2L6 in the form of a thioester and then directly transfers the ubiquitin to targeted substrates, such as UCKL1. Involved in the cytolytic activity of natural killer cells and cytotoxic T-cells. Protects against staurosporin-induced cell death. This is E3 ubiquitin-protein ligase RNF19B (rnf19b) from Xenopus laevis (African clawed frog).